Consider the following 86-residue polypeptide: MVKIRLMRLGRHKLPSYRMVVVDSRVKRDGSYIELIGHIDPINGTNKLNGALAIEWLKKGAQPTDTVKSILSKEGIWKQYAASKKA.

Belongs to the bacterial ribosomal protein bS16 family.

The protein is Small ribosomal subunit protein bS16 of Mycoplasmoides gallisepticum (strain R(low / passage 15 / clone 2)) (Mycoplasma gallisepticum).